Consider the following 109-residue polypeptide: Spermidine export protein MdtI (109 aa).

Topologically, residues 1 to 5 (MAQFE) are periplasmic. The chain crosses the membrane as a helical span at residues 6 to 26 (WVHAAWLALAIVLEIVANVFL). Residues 27–35 (KFSDGFRRK) are Cytoplasmic-facing. A helical membrane pass occupies residues 36 to 56 (IFGLLSLAAVLAAFSALSQAV). Residues 57-63 (KGIDLSV) lie on the Periplasmic side of the membrane. Residues 64–84 (VYALWGGFGIAATLAAGWILF) form a helical membrane-spanning segment. The Cytoplasmic segment spans residues 85–87 (GQR). A helical transmembrane segment spans residues 88–108 (LNRKGWIGLVLLLAGMIMVKL). A109 is a topological domain (periplasmic).

It belongs to the drug/metabolite transporter (DMT) superfamily. Small multidrug resistance (SMR) (TC 2.A.7.1) family. MdtI subfamily. As to quaternary structure, forms a complex with MdtJ.

Its subcellular location is the cell inner membrane. Catalyzes the excretion of spermidine. This Shigella flexneri protein is Spermidine export protein MdtI (mdtI).